A 438-amino-acid polypeptide reads, in one-letter code: GTPase Obg (438 aa).

Residues 2 to 160 (SMFLDTAKIS…RELELELKIL (159 aa)) form the Obg domain. The interval 128-147 (NIRFATPRNPAPEIAENGEP) is disordered. The OBG-type G domain occupies 161-338 (ADVGLVGFPS…LLDATANLLA (178 aa)). Residues 167–174 (GFPSVGKS), 192–196 (FTTIV), 214–217 (DLPG), 284–287 (NKMD), and 319–321 (STL) each bind GTP. Residues S174 and T194 each coordinate Mg(2+). The OCT domain occupies 360–438 (GFSEEEKAFE…IGNFEFEFVD (79 aa)).

This sequence belongs to the TRAFAC class OBG-HflX-like GTPase superfamily. OBG GTPase family. As to quaternary structure, monomer. Mg(2+) is required as a cofactor.

It is found in the cytoplasm. Its function is as follows. An essential GTPase which binds GTP, GDP and possibly (p)ppGpp with moderate affinity, with high nucleotide exchange rates and a fairly low GTP hydrolysis rate. Plays a role in control of the cell cycle, stress response, ribosome biogenesis and in those bacteria that undergo differentiation, in morphogenesis control. The polypeptide is GTPase Obg (Streptococcus uberis (strain ATCC BAA-854 / 0140J)).